The chain runs to 2527 residues: MASGSCQGCEEDEETLKKLIVRLNNVQEGKQIETLVQILEDLLVFTYSERASKLFQGKNIHVPLLIVLDSYMRVASVQQVGWSLLCKLIEVCPGTMQSLMGPQDVGNDWEVLGVHQLILKMLTVHNASVNLSVIGLKTLDLLLTSGKITLLILDEESDIFMLIFDAMHSFPANDEVQKLGCKALHVLFERVSEEQLTEFVENKDYMILLSALTNFKDEEEIVLHVLHCLHSLAIPCNNVEVLMSGNVRCYNIVVEAMKAFPMSERIQEVSCCLLHRLTLGNFFNILVLNEVHEFVVKAVQQYPENAALQISALSCLALLTETIFLNQDLEEKNENQENDDEGEEDKLFWLEACYKALTWHRKNKHVQEAACWALNNLLMYQNSLHEKIGDEDGHFPAHREVMLSMLMHSSSKEVFQASANALSTLLEQNVNFRKILLSKGIHLNVLELMQKHIHSPEVAESGCKMLNHLFEGSNTSLDIMAAVVPKILTVMKRHETSLPVQLEALRAILHFIVPGMPEESREDTEFHHKLNMVKKQCFKNDIHKLVLAALNRFIGNPGIQKCGLKVISSIVHFPDALEMLSLEGAMDSVLHTLQMYPDDQEIQCLGLSLIGYLITKKNVFIGTGHLLAKILVSSLYRFKDVAEIQTKGFQTILAILKLSASFSKLLVHHSFDLVIFHQMSSNIMEQKDQQFLNLCCKCFAKVAMDDYLKNVMLERACDQNNSIMVECLLLLGADANQAKEGSSLICQVCEKESSPKLVELLLNSGSREQDVRKALTISIGKGDSQIISLLLRRLALDVANNSICLGGFCIGKVEPSWLGPLFPDKTSNLRKQTNIASTLARMVIRYQMKSAVEEGTASGSDGNFSEDVLSKFDEWTFIPDSSMDSVFAQSDDLDSEGSEGSFLVKKKSNSISVGEFYRDAVLQRCSPNLQRHSNSLGPIFDHEDLLKRKRKILSSDDSLRSSKLQSHMRHSDSISSLASEREYITSLDLSANELRDIDALSQKCCISVHLEHLEKLELHQNALTSFPQQLCETLKSLTHLDLHSNKFTSFPSYLLKMSCIANLDVSRNDIGPSVVLDPTVKCPTLKQFNLSYNQLSFVPENLTDVVEKLEQLILEGNKISGICSPLRLKELKILNLSKNHISSLSENFLEACPKVESFSARMNFLAAMPFLPPSMTILKLSQNKFSCIPEAILNLPHLRSLDMSSNDIQYLPGPAHWKSLNLRELLFSHNQISILDLSEKAYLWSRVEKLHLSHNKLKEIPPEIGCLENLTSLDVSYNLELRSFPNEMGKLSKIWDLPLDELHLNFDFKHIGCKAKDIIRFLQQRLKKAVPYNRMKLMIVGNTGSGKTTLLQQLMKTKKSDLGMQSATVGIDVKDWPIQIRDKRKRDLVLNVWDFAGREEFYSTHPHFMTQRALYLAVYDLSKGQAEVDAMKPWLFNIKARASSSPVILVGTHLDVSDEKQRKACMSKITKELLNKRGFPAIRDYHFVNATEESDALAKLRKTIINESLNFKIRDQLVVGQLIPDCYVELEKIILSERKNVPIEFPVIDRKRLLQLVRENQLQLDENELPHAVHFLNESGVLLHFQDPALQLSDLYFVEPKWLCKIMAQILTVKVEGCPKHPKGIISRRDVEKFLSKKRKFPKNYMSQYFKLLEKFQIALPIGEEYLLVPSSLSDHRPVIELPHCENSEIIIRLYEMPYFPMGFWSRLINRLLEISPYMLSGRERALRPNRMYWRQGIYLNWSPEAYCLVGSEVLDNHPESFLKITVPSCRKGCILLGQVVDHIDSLMEEWFPGLLEIDICGEGETLLKKWALYSFNDGEEHQKILLDDLMKKAEEGDLLVNPDQPRLTIPISQIAPDLILADLPRNIMLNNDELEFEQAPEFLLGDGSFGSVYRAAYEGEEVAVKIFNKHTSLRLLRQELVVLCHLHHPSLISLLAAGIRPRMLVMELASKGSLDRLLQQDKASLTRTLQHRIALHVADGLRYLHSAMIIYRDLKPHNVLLFTLYPNAAIIAKIADYGIAQYCCRMGIKTSEGTPGFRAPEVARGNVIYNQQADVYSFGLLLYDILTTGGRIVEGLKFPNEFDELEIQGKLPDPVKEYGCAPWPMVEKLIKQCLKENPQERPTSAQVFDILNSAELVCLTRRILLPKNVIVECMVATHHNSRNASIWLGCGHTDRGQLSFLDLNTEGYTSEEVADSRILCLALVHLPVEKESWIVSGTQSGTLLVINTEDGKKRHTLEKMTDSVTCLYCNSFSKQSKQKNFLLVGTADGKLAIFEDKTVKLKGAAPLKILNIGNVSTPLMCLSESTNSTERNVMWGGCGTKIFSFSNDFTIQKLIETRTSQLFSYAAFSDSNIITVVVDTALYIAKQNSPVVEVWDKKTEKLCGLIDCVHFLREVMVKENKESKHKMSYSGRVKTLCLQKNTALWIGTGGGHILLLDLSTRRLIRVIYNFCNSVRVMMTAQLGSLKNVMLVLGYNRKNTEGTQKQKEIQSCLTVWDINLPHEVQNLEKHIEVRKELAEKMRRTSVE.

Positions 1–969 (MASGSCQGCE…RSSKLQSHMR (969 aa)) are required for RAB29-mediated activation. Residues 319–348 (LTETIFLNQDLEEKNENQENDDEGEEDKLF) are a coiled coil. Residues Ser910, Ser935, Ser955, and Ser973 each carry the phosphoserine modification. LRR repeat units follow at residues 983–1004 (YITSLDLSANELRDIDALSQKC), 1012–1033 (HLEKLELHQNALTSFPQQLCET), 1036–1057 (SLTHLDLHSNKFTSFPSYLLKM), 1059–1080 (CIANLDVSRNDIGPSVVLDPTV), 1084–1105 (TLKQFNLSYNQLSFVPENLTDV), 1108–1129 (KLEQLILEGNKISGICSPLRLK), 1130–1150 (ELKILNLSKNHISSLSENFLE), 1156–1171 (ESFSARMNFLAAMPFL), 1174–1196 (SMTILKLSQNKFSCIPEAILNLP), 1197–1218 (HLRSLDMSSNDIQYLPGPAHWK), 1221–1245 (NLRELLFSHNQISILDLSEKAYLWS), 1246–1267 (RVEKLHLSHNKLKEIPPEIGCL), and 1269–1291 (NLTSLDVSYNLELRSFPNEMGKL). Phosphoserine; by autocatalysis is present on Ser1292. A Roc domain is found at 1328 to 1511 (KAVPYNRMKL…KTIINESLNF (184 aa)). Residue 1341 to 1348 (GNTGSGKT) coordinates GTP. A Phosphoserine modification is found at Ser1444. The region spanning 1546–1740 (PVIDRKRLLQ…RMYWRQGIYL (195 aa)) is the COR domain. In terms of domain architecture, Protein kinase spans 1879 to 2138 (QAPEFLLGDG…FDILNSAELV (260 aa)). Residues Leu1885, Asp1887, Gly1888, Gly1891, Val1893, Ala1904, Lys1906, Met1947, Glu1948, Ala1950, Ser1954, and Arg1957 each contribute to the ATP site. The Proton acceptor role is filled by Asp1994. The ATP site is built by His1998, Leu2001, Ala2016, and Asp2017. A GTP-binding site is contributed by 2098–2121 (EYGCAPWPMVEKLIKQCLKENPQE). WD repeat units follow at residues 2139–2183 (CLTR…SFLD), 2188–2228 (GYTS…LVIN), 2233–2276 (KKRH…AIFE), 2281–2327 (KLKG…FSFS), 2333–2377 (QKLI…EVWD), 2402–2438 (KESKHKMSYSGRVKTLCLQKNTALWIGTGGGHILLLD), and 2443–2497 (RLIR…TVWD). 2295–2298 (NVST) is a binding site for GTP.

The protein belongs to the protein kinase superfamily. TKL Ser/Thr protein kinase family. In terms of assembly, homodimer. Homotetramer; when activated by GTP-bound RAB29. Interacts with PRKN, PRDX3, and TPCN2. Interacts with VPS35. Interacts (via N-terminus) with RAB29; this interaction is direct and stimulates kinase activity. Interacts (via ROC domain) with SEC16A. Interacts with APP; interaction promotes phosphorylation of 'Thr-743' of APP. Interacts with MAPT. Interacts with RAB8A, RAB10, and RAB12. Interacts (via N-terminus) with RAB32. Interacts with YWHAG; this interaction is dependent on phosphorylation of Ser-910 and either Ser-935 or Ser-1444. Interacts with SFN; this interaction is dependent on phosphorylation of Ser-910 and/or Ser-935. Requires Mg(2+) as cofactor. Post-translationally, autophosphorylated at Ser-1292; autophosphorylation is stimulated by RAB29. Phosphorylation of Ser-910 and either Ser-935 or Ser-1444 facilitates interaction with YWHAG. Phosphorylation of Ser-910 and/or Ser-935 facilitates interaction with SFN. Ubiquitinated by TRIM1; undergoes 'Lys-48'-linked polyubiquitination leading to proteasomal degradation. In terms of tissue distribution, expressed in pyramidal neurons in all cortical laminae of the visual cortex, in neurons of the substantia nigra pars compacta and caudate putamen (at protein level). Expressed in neutrophils (at protein level). Expressed in the brain. Expressed throughout the adult brain, but at a lower level than in heart and liver. Also expressed in placenta, lung, skeletal muscle, kidney and pancreas. In the brain, expressed in the cerebellum, cerebral cortex, medulla, spinal cord occipital pole, frontal lobe, temporal lobe and putamen. Expression is particularly high in brain dopaminoceptive areas.

The protein localises to the cytoplasmic vesicle. It localises to the perikaryon. Its subcellular location is the golgi apparatus membrane. The protein resides in the cell projection. It is found in the axon. The protein localises to the dendrite. It localises to the endoplasmic reticulum membrane. Its subcellular location is the secretory vesicle. The protein resides in the synaptic vesicle membrane. It is found in the endosome. The protein localises to the lysosome. It localises to the mitochondrion outer membrane. Its subcellular location is the cytoplasm. The protein resides in the cytoskeleton. It is found in the phagosome. The catalysed reaction is L-threonyl-[protein] + ATP = O-phospho-L-threonyl-[protein] + ADP + H(+). The enzyme catalyses L-seryl-[protein] + ATP = O-phospho-L-seryl-[protein] + ADP + H(+). It carries out the reaction GTP + H2O = GDP + phosphate + H(+). Kinase activity is regulated by the GTPase activity of the ROC domain. GTP-bound LRRK2 kinase activity is stimulated by RAB29. Phosphorylation of RAB10 'Thr-73' is stimulated by RAB29 and RAB32. Inhibited by small molecule inhibitor MLi-2. In terms of biological role, serine/threonine-protein kinase which phosphorylates a broad range of proteins involved in multiple processes such as neuronal plasticity, innate immunity, autophagy, and vesicle trafficking. Is a key regulator of RAB GTPases by regulating the GTP/GDP exchange and interaction partners of RABs through phosphorylation. Phosphorylates RAB3A, RAB3B, RAB3C, RAB3D, RAB5A, RAB5B, RAB5C, RAB8A, RAB8B, RAB10, RAB12, RAB29, RAB35, and RAB43. Regulates the RAB3IP-catalyzed GDP/GTP exchange for RAB8A through the phosphorylation of 'Thr-72' on RAB8A. Inhibits the interaction between RAB8A and GDI1 and/or GDI2 by phosphorylating 'Thr-72' on RAB8A. Regulates primary ciliogenesis through phosphorylation of RAB8A and RAB10, which promotes SHH signaling in the brain. Together with RAB29, plays a role in the retrograde trafficking pathway for recycling proteins, such as mannose-6-phosphate receptor (M6PR), between lysosomes and the Golgi apparatus in a retromer-dependent manner. Regulates neuronal process morphology in the intact central nervous system (CNS). Plays a role in synaptic vesicle trafficking. Plays an important role in recruiting SEC16A to endoplasmic reticulum exit sites (ERES) and in regulating ER to Golgi vesicle-mediated transport and ERES organization. Positively regulates autophagy through a calcium-dependent activation of the CaMKK/AMPK signaling pathway. The process involves activation of nicotinic acid adenine dinucleotide phosphate (NAADP) receptors, increase in lysosomal pH, and calcium release from lysosomes. Phosphorylates PRDX3. By phosphorylating APP on 'Thr-743', which promotes the production and the nuclear translocation of the APP intracellular domain (AICD), regulates dopaminergic neuron apoptosis. Acts as a positive regulator of innate immunity by mediating phosphorylation of RIPK2 downstream of NOD1 and NOD2, thereby enhancing RIPK2 activation. Independent of its kinase activity, inhibits the proteasomal degradation of MAPT, thus promoting MAPT oligomerization and secretion. In addition, has GTPase activity via its Roc domain which regulates LRRK2 kinase activity. Recruited by RAB29/RAB7L1 to overloaded lysosomes where it phosphorylates and stabilizes RAB8A and RAB10 which promote lysosomal content release and suppress lysosomal enlargement through the EHBP1 and EHBP1L1 effector proteins. The protein is Leucine-rich repeat serine/threonine-protein kinase 2 (LRRK2) of Homo sapiens (Human).